A 143-amino-acid chain; its full sequence is uncharacterized protein (143 aa).

2 helical membrane-spanning segments follow: residues 16–36 (LIFAQIFIGCLMYFMLIIFVW) and 48–68 (ICYIIIFAIIDFVVCFKFIYV). Residue asparagine 71 is glycosylated (N-linked (GlcNAc...) asparagine; by host).

Its subcellular location is the membrane. This is an uncharacterized protein from Acanthamoeba polyphaga (Amoeba).